The sequence spans 257 residues: Phycoerythrobilin:ferredoxin oxidoreductase (257 aa).

Belongs to the HY2 family.

It catalyses the reaction (3Z)-phycoerythrobilin + oxidized 2[4Fe-4S]-[ferredoxin] = 15,16-dihydrobiliverdin + reduced 2[4Fe-4S]-[ferredoxin] + 2 H(+). Functionally, catalyzes the two-electron reduction of the C2 and C3(1) diene system of 15,16-dihydrobiliverdin. The polypeptide is Phycoerythrobilin:ferredoxin oxidoreductase (Prochlorococcus marinus (strain MIT 9303)).